Reading from the N-terminus, the 607-residue chain is 2-isopropylmalate synthase (607 aa).

Over residues 1–10 the composition is skewed to polar residues; that stretch reads MASFSESLSQ. A disordered region spans residues 1–40; the sequence is MASFSESLSQDPADAYKSAPSITKPMGPPSPGQPQWNPQR. Positions 75-349 constitute a Pyruvate carboxyltransferase domain; sequence PLWCAVDLRD…DPQIDFSNID (275 aa). 4 residues coordinate Mg(2+): D84, H288, H290, and N324. The tract at residues 491 to 607 is regulatory domain; sequence PVQPLERIKQ…VSAVNRAMPR (117 aa).

The protein belongs to the alpha-IPM synthase/homocitrate synthase family. LeuA type 2 subfamily. As to quaternary structure, homodimer. It depends on Mg(2+) as a cofactor.

The protein localises to the cytoplasm. The enzyme catalyses 3-methyl-2-oxobutanoate + acetyl-CoA + H2O = (2S)-2-isopropylmalate + CoA + H(+). Its pathway is amino-acid biosynthesis; L-leucine biosynthesis; L-leucine from 3-methyl-2-oxobutanoate: step 1/4. Its function is as follows. Catalyzes the condensation of the acetyl group of acetyl-CoA with 3-methyl-2-oxobutanoate (2-ketoisovalerate) to form 3-carboxy-3-hydroxy-4-methylpentanoate (2-isopropylmalate). This is 2-isopropylmalate synthase from Mycobacterium leprae (strain TN).